The sequence spans 570 residues: Potassium-transporting ATPase potassium-binding subunit (570 aa).

Transmembrane regions (helical) follow at residues 7–27 (AEIA…GVFL), 65–85 (AYAL…YAVL), 95–115 (PQGF…SFIT), 135–155 (LVLT…AAAL), 179–199 (LYLL…LGLP), 254–274 (LTNL…FFAF), 286–306 (ALVI…YATE), 383–403 (GVAI…LMVG), 422–442 (ILAV…AAVL), 489–509 (LGIA…AIAG), and 528–548 (GGLF…LQFF).

It belongs to the KdpA family. In terms of assembly, the system is composed of three essential subunits: KdpA, KdpB and KdpC.

The protein localises to the cell inner membrane. Its function is as follows. Part of the high-affinity ATP-driven potassium transport (or Kdp) system, which catalyzes the hydrolysis of ATP coupled with the electrogenic transport of potassium into the cytoplasm. This subunit binds the periplasmic potassium ions and delivers the ions to the membrane domain of KdpB through an intramembrane tunnel. The sequence is that of Potassium-transporting ATPase potassium-binding subunit from Caulobacter vibrioides (strain ATCC 19089 / CIP 103742 / CB 15) (Caulobacter crescentus).